We begin with the raw amino-acid sequence, 153 residues long: Deoxyuridine 5'-triphosphate nucleotidohydrolase (153 aa).

Substrate is bound by residues 71–73 (RSG), asparagine 84, 88–90 (TID), and lysine 98.

The protein belongs to the dUTPase family. Mg(2+) serves as cofactor.

The enzyme catalyses dUTP + H2O = dUMP + diphosphate + H(+). Its pathway is pyrimidine metabolism; dUMP biosynthesis; dUMP from dCTP (dUTP route): step 2/2. Its function is as follows. This enzyme is involved in nucleotide metabolism: it produces dUMP, the immediate precursor of thymidine nucleotides and it decreases the intracellular concentration of dUTP so that uracil cannot be incorporated into DNA. The polypeptide is Deoxyuridine 5'-triphosphate nucleotidohydrolase (Wolbachia pipientis subsp. Culex pipiens (strain wPip)).